Consider the following 683-residue polypeptide: Protein kinase C eta type (683 aa).

The 118-residue stretch at 1-118 (MSSGTMKFNG…LRTAGTSDTF (118 aa)) folds into the C2 domain. Phosphoserine is present on residues Ser28 and Ser32. 2 Phorbol-ester/DAG-type zinc fingers span residues 171-222 (GHKF…VTAC) and 245-295 (PHKF…APNC). Ser317 carries the post-translational modification Phosphoserine. In terms of domain architecture, Protein kinase spans 355–614 (FEFIRVLGKG…EHEILRHPFF (260 aa)). Residues 361–369 (LGKGSFGKV) and Lys384 each bind ATP. The Proton acceptor role is filled by Asp479. Thr513 carries the phosphothreonine; by PDPK1 modification. The AGC-kinase C-terminal domain maps to 615–683 (KEIDWVQLNH…FSYVSPELQP (69 aa)). Thr656 is subject to Phosphothreonine. At Ser675 the chain carries Phosphoserine.

It belongs to the protein kinase superfamily. AGC Ser/Thr protein kinase family. PKC subfamily. As to quaternary structure, interacts with FYN. Interacts with RALA. Interacts with DGKQ.

Its subcellular location is the cytoplasm. The catalysed reaction is L-seryl-[protein] + ATP = O-phospho-L-seryl-[protein] + ADP + H(+). It catalyses the reaction L-threonyl-[protein] + ATP = O-phospho-L-threonyl-[protein] + ADP + H(+). With respect to regulation, novel PKCs (PRKCD, PRKCE, PRKCH and PRKCQ) are calcium-insensitive, but activated by diacylglycerol (DAG) and phosphatidylserine. Three specific sites; Thr-513 (activation loop of the kinase domain), Thr-656 (turn motif) and Ser-675 (hydrophobic region), need to be phosphorylated for its full activation. In terms of biological role, calcium-independent, phospholipid- and diacylglycerol (DAG)-dependent serine/threonine-protein kinase that is involved in the regulation of cell differentiation in keratinocytes and pre-B cell receptor, mediates regulation of epithelial tight junction integrity and foam cell formation, and is required for glioblastoma proliferation and apoptosis prevention in MCF-7 cells. In keratinocytes, binds and activates the tyrosine kinase FYN, which in turn blocks epidermal growth factor receptor (EGFR) signaling and leads to keratinocyte growth arrest and differentiation. Associates with the cyclin CCNE1-CDK2-CDKN1B complex and inhibits CDK2 kinase activity, leading to RB1 dephosphorylation and thereby G1 arrest in keratinocytes. In association with RALA activates actin depolymerization, which is necessary for keratinocyte differentiation. In the pre-B cell receptor signaling, functions downstream of BLNK by up-regulating IRF4, which in turn activates L chain gene rearrangement. Regulates epithelial tight junctions (TJs) by phosphorylating occludin (OCLN) on threonine residues, which is necessary for the assembly and maintenance of TJs. In association with PLD2 and via TLR4 signaling, is involved in lipopolysaccharide (LPS)-induced RGS2 down-regulation and foam cell formation. Upon PMA stimulation, mediates glioblastoma cell proliferation by activating the mTOR pathway, the PI3K/AKT pathway and the ERK1-dependent phosphorylation of ELK1. Involved in the protection of glioblastoma cells from irradiation-induced apoptosis by preventing caspase-9 activation. In camptothecin-treated MCF-7 cells, regulates NF-kappa-B upstream signaling by activating IKBKB, and confers protection against DNA damage-induced apoptosis. Promotes oncogenic functions of ATF2 in the nucleus while blocking its apoptotic function at mitochondria. Phosphorylates ATF2 which promotes its nuclear retention and transcriptional activity and negatively regulates its mitochondrial localization. In Rattus norvegicus (Rat), this protein is Protein kinase C eta type (Prkch).